Reading from the N-terminus, the 176-residue chain is Large ribosomal subunit protein uL22 (176 aa).

A disordered region spans residues 113-176 (VVESRPSKDQ…EISEAKGGSD (64 aa)). Residues 136–152 (SKAAATAPAKKSSASKA) are compositionally biased toward low complexity. Basic and acidic residues predominate over residues 159–176 (TKAESKTSEISEAKGGSD).

This sequence belongs to the universal ribosomal protein uL22 family. As to quaternary structure, part of the 50S ribosomal subunit.

Functionally, this protein binds specifically to 23S rRNA; its binding is stimulated by other ribosomal proteins, e.g. L4, L17, and L20. It is important during the early stages of 50S assembly. It makes multiple contacts with different domains of the 23S rRNA in the assembled 50S subunit and ribosome. In terms of biological role, the globular domain of the protein is located near the polypeptide exit tunnel on the outside of the subunit, while an extended beta-hairpin is found that lines the wall of the exit tunnel in the center of the 70S ribosome. This chain is Large ribosomal subunit protein uL22, found in Mycobacterium ulcerans (strain Agy99).